Reading from the N-terminus, the 281-residue chain is Eukaryotic translation initiation factor 3 subunit G (281 aa).

A disordered region spans residues 1 to 32 (MSRPAGRTDWAEEDDETELALPSQTVVKNKDG). An RRM domain is found at 202-280 (ATLRVTNVSE…LILRVEFAKK (79 aa)).

This sequence belongs to the eIF-3 subunit G family. Component of the eukaryotic translation initiation factor 3 (eIF-3) complex.

The protein resides in the cytoplasm. In terms of biological role, RNA-binding component of the eukaryotic translation initiation factor 3 (eIF-3) complex, which is involved in protein synthesis of a specialized repertoire of mRNAs and, together with other initiation factors, stimulates binding of mRNA and methionyl-tRNAi to the 40S ribosome. The eIF-3 complex specifically targets and initiates translation of a subset of mRNAs involved in cell proliferation. This subunit can bind 18S rRNA. The polypeptide is Eukaryotic translation initiation factor 3 subunit G (Phaeosphaeria nodorum (strain SN15 / ATCC MYA-4574 / FGSC 10173) (Glume blotch fungus)).